Consider the following 1646-residue polypeptide: Monensin-resistant homolog 2 (1646 aa).

This sequence belongs to the MON2 family.

The protein resides in the golgi apparatus. Functionally, may be required for traffic between late Golgi and early endosomes. The polypeptide is Monensin-resistant homolog 2 (mon-2) (Caenorhabditis elegans).